We begin with the raw amino-acid sequence, 182 residues long: Signal peptidase I (182 aa).

Residues 1-13 (MTKQKEKRGRRWP) are Cytoplasmic-facing. The helical transmembrane segment at 14-30 (WFVAVCVVATLRLFVFS) threads the bilayer. Topologically, residues 31-182 (NYVVEGKSMM…WPFKQFAFQF (152 aa)) are extracellular. Residues Ser38 and Lys79 contribute to the active site.

This sequence belongs to the peptidase S26 family.

Its subcellular location is the cell membrane. It catalyses the reaction Cleavage of hydrophobic, N-terminal signal or leader sequences from secreted and periplasmic proteins.. This is Signal peptidase I (lepB) from Bacillus caldolyticus.